A 248-amino-acid chain; its full sequence is Tetraspanin-16 (248 aa).

Residues 1–7 lie on the Cytoplasmic side of the membrane; it reads MSEIRTG. Residues 8 to 28 form a helical membrane-spanning segment; the sequence is FLTMATIILICIGLTMTGTGL. Topologically, residues 29-44 are extracellular; sequence YYRKTVSKCIRETDGS. Residues 45–65 traverse the membrane as a helical segment; sequence FVVIGLLLLVIPQFALYAICC. At 66-69 the chain is on the cytoplasmic side; sequence HSKR. A helical membrane pass occupies residues 70–90; that stretch reads MFTIYIYAMIFVSIVLGGYSL. Topologically, residues 91-208 are extracellular; that stretch reads KCFIYNTTFG…MSILKAIVHQ (118 aa). N-linked (GlcNAc...) asparagine glycans are attached at residues Asn96 and Asn141. The helical transmembrane segment at 209-229 threads the bilayer; that stretch reads WKYLSMFSYPALFLVCLSLAI. At 230–248 the chain is on the cytoplasmic side; sequence SRSIMDTFDEPDDYRGYYS.

This sequence belongs to the tetraspanin (TM4SF) family.

The protein localises to the membrane. In terms of biological role, may be involved in the regulation of cell differentiation. The chain is Tetraspanin-16 (TET16) from Arabidopsis thaliana (Mouse-ear cress).